The following is a 940-amino-acid chain: Inter-alpha-trypsin inhibitor heavy chain H5 (940 aa).

The first 16 residues, 1–16 (MLLLLGLCLGLSQCVG), serve as a signal peptide directing secretion. The 127-residue stretch at 35–161 (VPRQVRLLQR…KAAFFLSYEE (127 aa)) folds into the VIT domain. Asn97 and Asn127 each carry an N-linked (GlcNAc...) asparagine glycan. Disordered regions lie at residues 117-136 (KSGD…NGEK) and 208-227 (SRQR…PSTV). N-linked (GlcNAc...) asparagine glycosylation occurs at Asn231. One can recognise a VWFA domain in the interval 295 to 478 (NVVFVLDSSA…SQLIGFYDEI (184 aa)). Residues 405–432 (DGWEAHGRGDAHPQDPQQHPRGRPRPSL) are disordered. Over residues 407-417 (WEAHGRGDAHP) the composition is skewed to basic and acidic residues. Residue Asn508 is glycosylated (N-linked (GlcNAc...) asparagine). The disordered stretch occupies residues 541 to 571 (PKTDVPVGPQKAGKDVTGSPRPGGDGERNPN). Asn774, Asn793, and Asn860 each carry an N-linked (GlcNAc...) asparagine glycan.

It belongs to the ITIH family.

Its subcellular location is the secreted. Its function is as follows. May act as a tumor suppressor. In Pongo abelii (Sumatran orangutan), this protein is Inter-alpha-trypsin inhibitor heavy chain H5 (ITIH5).